The primary structure comprises 365 residues: D-alanine--D-alanine ligase (365 aa).

An ATP-grasp domain is found at 140–346; the sequence is KKILRRHGLQ…YSQLLTDLIY (207 aa). 173-228 is an ATP binding site; that stretch reads EKQLSYPIFVKPANLGSSVGISKVKNREELIQGIDLAVKYDMKCLAEEFIPGKEIE. Aspartate 299, glutamate 313, and asparagine 315 together coordinate Mg(2+).

Belongs to the D-alanine--D-alanine ligase family. Mg(2+) serves as cofactor. The cofactor is Mn(2+).

The protein localises to the cytoplasm. The catalysed reaction is 2 D-alanine + ATP = D-alanyl-D-alanine + ADP + phosphate + H(+). It functions in the pathway cell wall biogenesis; peptidoglycan biosynthesis. Cell wall formation. The chain is D-alanine--D-alanine ligase from Natranaerobius thermophilus (strain ATCC BAA-1301 / DSM 18059 / JW/NM-WN-LF).